The primary structure comprises 281 residues: UDP-N-acetylenolpyruvoylglucosamine reductase (281 aa).

One can recognise an FAD-binding PCMH-type domain in the interval 17–180; it reads VGGKAKKLII…LSATFKFDNG (164 aa). Arg159 is an active-site residue. The Proton donor role is filled by Ser206. The active site involves Glu276.

Belongs to the MurB family. FAD serves as cofactor.

The protein localises to the cytoplasm. The enzyme catalyses UDP-N-acetyl-alpha-D-muramate + NADP(+) = UDP-N-acetyl-3-O-(1-carboxyvinyl)-alpha-D-glucosamine + NADPH + H(+). It participates in cell wall biogenesis; peptidoglycan biosynthesis. In terms of biological role, cell wall formation. The polypeptide is UDP-N-acetylenolpyruvoylglucosamine reductase (Fusobacterium nucleatum subsp. nucleatum (strain ATCC 25586 / DSM 15643 / BCRC 10681 / CIP 101130 / JCM 8532 / KCTC 2640 / LMG 13131 / VPI 4355)).